A 275-amino-acid chain; its full sequence is Collectin-10 (275 aa).

The signal sequence occupies residues 1–25 (MKYGKLWPIGVSVLGVIALHVRVLS). N-linked (GlcNAc...) asparagine glycosylation is present at Asn-30. Positions 39-76 (THTILPGPKGDDGEAGDTGVLGKLGKDGPKGQKGNKGI) are disordered. A Collagen-like domain is found at 51–110 (GEAGDTGVLGKLGKDGPKGQKGNKGIIGDSGDLGLIGKIGPIGSKGDKGHKGLPGLPGGK). A C-type lectin domain is found at 153 to 269 (TDEKYYYIVR…CSLTIYFVCE (117 aa)). 2 disulfides stabilise this stretch: Cys-174–Cys-268 and Cys-246–Cys-260.

The protein belongs to the COLEC10/COLEC11 family.

The protein localises to the secreted. Functionally, lectin that binds to various sugars: galactose &gt; mannose = fucose &gt; N-acetylglucosamine &gt; N-acetylgalactosamine. In Xenopus tropicalis (Western clawed frog), this protein is Collectin-10 (colec10).